We begin with the raw amino-acid sequence, 203 residues long: Octanoyltransferase (203 aa).

The BPL/LPL catalytic domain maps to 30-203 (EDQDNYFFIT…HIIKEGRKLV (174 aa)). Substrate is bound by residues 69-76 (RGGSVTFH), 135-137 (SVG), and 148-150 (GIS). The active-site Acyl-thioester intermediate is the cysteine 166.

The protein belongs to the LipB family.

It localises to the cytoplasm. It carries out the reaction octanoyl-[ACP] + L-lysyl-[protein] = N(6)-octanoyl-L-lysyl-[protein] + holo-[ACP] + H(+). The protein operates within protein modification; protein lipoylation via endogenous pathway; protein N(6)-(lipoyl)lysine from octanoyl-[acyl-carrier-protein]: step 1/2. Catalyzes the transfer of endogenously produced octanoic acid from octanoyl-acyl-carrier-protein onto the lipoyl domains of lipoate-dependent enzymes. Lipoyl-ACP can also act as a substrate although octanoyl-ACP is likely to be the physiological substrate. This chain is Octanoyltransferase, found in Persephonella marina (strain DSM 14350 / EX-H1).